The following is a 147-amino-acid chain: MSNFTAEDKAAITSLWAKVNVEDAGGETLGRLLVVYPWTQRFFDSFGSLSSPSAIMGNPKVKAHGAKVLTSLGEAIKNLDDLKGTFGQLSELHCDKLHVDPENFRLLGNVLVTVLAVHHGKEFTPEVQASWQKMVAGVASALGSRYH.

Residues 3 to 147 (NFTAEDKAAI…VASALGSRYH (145 aa)) form the Globin domain. At threonine 13 the chain carries Phosphothreonine. Phosphoserine is present on residues serine 45, serine 51, and serine 53. Lysine 60 carries the post-translational modification N6-acetyllysine. A heme b-binding site is contributed by histidine 64. At lysine 83 the chain carries N6-acetyllysine. Residue histidine 93 participates in heme b binding. Cysteine 94 bears the S-nitrosocysteine mark. Serine 140 carries the post-translational modification Phosphoserine.

The protein belongs to the globin family. In terms of assembly, heterotetramer of two alpha chains and two gamma chains in fetal hemoglobin (Hb F). As to expression, red blood cells.

Gamma chains make up the fetal hemoglobin F, in combination with alpha chains. This is Hemoglobin subunit gamma-1 (HBG1) from Sapajus apella (Brown-capped capuchin).